The chain runs to 1194 residues: MDRGGYRGGRGDGRGRGGGGDRGRGYSGRGDGRGRGGDGDRGYSGRGDGHGRGGGGDRGRGYSGRGDGRGRGGGGDRGRGYSGRGDGHGRGGGGDRGRGYSGRGRGFVQDRDGGWVNPGQSSGGHVRGRGTQLQQPPPQEVPPSSSQAQVSQGVAPGDVGQGGVGDVGRDGVGDVGRDGVGDVGQGGVGDVGQVGVGDVGQGGVGDVGQGGVGDVGRDGVGDVGRDGVGDVGRGGVGDRGQSQSGLSSGHFGRGTQLQQPQPQAVSQSSSQGQVSQSFATGGVGLGAWARKPQLFSDSTVLPSSSSSNVVASHTASGSQVMTPKPSSSDKKEPVKRPDKGGNIKVKGVINLSVNHFRVSFSTESVIRHYDVDIKGENSSKKISRFELAMVKEKLFKDNNDFPNAMTAYDGQKNIFSAVELPTGSFKVDFSETEEIMRGRSYTFIIKQVKELKLLDLQAYIDGRSTFIPRDVLQGMDVVMKEHPSKRMITVGKRFFSTRLEIDFGYGVGAAKGFHHTLKPTVQGLSLCLNSSLLAFRKAISVIEYLKLYFGWRNIRQFKNCRPDDVVQELIGLKVTVDHRKTKQKFIIMGLSKDDTKDIKFDFIDHAGNQPPRKISIVEYFKEKYGRDIDHKDIPCLNLGKKGRENFVPMEFCNLVEGQIFPKEKLYRDSAAWLKELSLVTPQQRLENINKMIKSSDGPRGGDIIGNFGLRVDPNMTTVEGRVLEAPTLKLTDRRGNPIHEKLMSESNQWNLTTKGVTKGSIIKHWAVLDFTASESLKKKMPGYFVNKLIERCKGLGMQMEAPIVCKTSSMETLYDGNALEELLRSVIDEASHNHGGACPTLVLCAMTGKHDGYKTLKWIAETKLGLVTQCFLTISAIKGETVSDQYLANLALKINAKVGGTNVELVDNIFSFFKKEDKVMFIGADVNHPAAHDNMSPSIVAVVGTLNWPEANRYAARVKAQSHRKEEIQGFGETCWELIEAHSQAPEKRPNKIVIFRDGVSDGQFDMVLNVELQNVKDVFAKVGYNPQITVIVAQKRHQTRFFPATTSKDGRAKGNVPSGTVVDTTIIHPFEYDFYLCSQHGAIGTSKPTHYYVLSDEIGFNSNQIQKLIFDLCFTFTRCTKPVALVPPVSYADKAASRGRVYYEASLMKKNSKQSRGASSSSASVASSSSSVTMEDKEIFKVHAGIENFMFFV.

Residues 1–98 (MDRGGYRGGR…GRGGGGDRGR (98 aa)) are compositionally biased toward basic and acidic residues. Disordered stretches follow at residues 1-277 (MDRG…VSQS) and 299-341 (TVLP…DKGG). A compositionally biased stretch (low complexity) spans 142–158 (PPSSSQAQVSQGVAPGD). Residues 167 to 180 (VGRDGVGDVGRDGV) are compositionally biased toward basic and acidic residues. Residues 181 to 214 (GDVGQGGVGDVGQVGVGDVGQGGVGDVGQGGVGD) show a composition bias toward gly residues. Basic and acidic residues predominate over residues 215-228 (VGRDGVGDVGRDGV). Gly residues predominate over residues 229–238 (GDVGRGGVGD). Composition is skewed to low complexity over residues 256–277 (QLQQ…VSQS) and 299–316 (TVLP…HTAS). Polar residues predominate over residues 317–326 (GSQVMTPKPS). A compositionally biased stretch (basic and acidic residues) spans 327-341 (SSDKKEPVKRPDKGG). One can recognise a PAZ domain in the interval 540-656 (SVIEYLKLYF…VPMEFCNLVE (117 aa)). The Piwi domain occupies 841–1145 (LVLCAMTGKH…AASRGRVYYE (305 aa)).

The protein belongs to the argonaute family. Ago subfamily.

Involved in RNA-mediated post-transcriptional gene silencing (PTGS). Main component of the RNA-induced silencing complex (RISC) that binds to a short guide RNA such as a microRNA (miRNA) or small interfering RNA (siRNA). RISC uses the mature miRNA or siRNA as a guide for slicer-directed cleavage of homologous mRNAs to repress gene expression. The sequence is that of Protein argonaute 3 (AGO3) from Arabidopsis thaliana (Mouse-ear cress).